The primary structure comprises 657 residues: Glycogen debranching enzyme (657 aa).

The Nucleophile role is filled by D336. The Proton donor role is filled by E371. Residues 458 to 467 (NEANGEENRD) are compositionally biased toward basic and acidic residues. Residues 458 to 479 (NEANGEENRDGTNNNYSNNHGK) form a disordered region.

Belongs to the glycosyl hydrolase 13 family.

The catalysed reaction is Hydrolysis of (1-&gt;6)-alpha-D-glucosidic linkages to branches with degrees of polymerization of three or four glucose residues in limit dextrin.. The protein operates within glycan degradation; glycogen degradation. Removes maltotriose and maltotetraose chains that are attached by 1,6-alpha-linkage to the limit dextrin main chain, generating a debranched limit dextrin. In Escherichia coli (strain SE11), this protein is Glycogen debranching enzyme.